Consider the following 530-residue polypeptide: PC4 and SFRS1-interacting protein (530 aa).

Residues Met1–Asn64 form the PWWP domain. Lys75 participates in a covalent cross-link: Glycyl lysine isopeptide (Lys-Gly) (interchain with G-Cter in SUMO2). Residues Pro88–Asp349 form a disordered region. Residues Ser93–Asp107 are compositionally biased toward low complexity. 3 positions are modified to phosphoserine: Ser102, Ser105, and Ser106. The segment covering Lys113–Lys135 has biased composition (basic and acidic residues). A phosphothreonine mark is found at Thr115 and Thr122. A Phosphoserine modification is found at Ser129. Thr141 bears the Phosphothreonine mark. The segment covering Ala144–Ala153 has biased composition (basic residues). The Nuclear localization signal signature appears at Arg146 to Gln156. Thr167 carries the phosphothreonine modification. Ser177 and Ser206 each carry phosphoserine. The segment covering Glu213–Arg261 has biased composition (basic and acidic residues). Ser271 is subject to Phosphoserine. Thr272 carries the post-translational modification Phosphothreonine. 2 positions are modified to phosphoserine: Ser273 and Ser275. Positions Asp274 to Glu283 are enriched in acidic residues. Residues Lys287–Met302 are compositionally biased toward basic residues. Basic and acidic residues predominate over residues Gly305–Asp349. 2 coiled-coil regions span residues Gln306–Lys334 and Asn371–Glu395. The interval Val340–Thr417 is integrase-binding domain (IBD). Ser434 carries the phosphoserine modification. Thr437 carries the post-translational modification Phosphothreonine. Position 443 is a phosphoserine (Ser443). Residues Glu446 to Thr473 show a composition bias toward basic and acidic residues. Residues Glu446 to Asn530 form a disordered region. Positions Gly474–Gly494 are enriched in polar residues. Basic and acidic residues predominate over residues Glu498–Asn530. Ser514 carries the post-translational modification Phosphoserine. Arg517 carries the citrulline modification. Ser522 bears the Phosphoserine mark. Thr527 bears the Phosphothreonine mark.

Belongs to the HDGF family. In terms of assembly, monomer. Interacts with IFRD1/PC4. Interacts (via IBD domain) with POGZ (via IBM motif) and CDCA7L (via IBM motifs). Interacts (via IBD domain) with KMT2A (via IBM motifs) with a moderate affinity whereas interacts with the KMT2A-MEN1 complex with a greater affinity; MEN1 enhances interaction of KMT2A with PSIP1. Interacts (via IBD domain) with IWS1 (via IBM motif), MED1 (via IBM motif) and DBF4 (via IBM motifs). Post-translationally, citrullinated by PADI4.

It is found in the nucleus. Functionally, transcriptional coactivator involved in neuroepithelial stem cell differentiation and neurogenesis. Involved in particular in lens epithelial cell gene regulation and stress responses. May play an important role in lens epithelial to fiber cell terminal differentiation. May play a protective role during stress-induced apoptosis. The polypeptide is PC4 and SFRS1-interacting protein (PSIP1) (Bos taurus (Bovine)).